A 919-amino-acid polypeptide reads, in one-letter code: Probable glucan 1,3-alpha-glucosidase (919 aa).

Residues 1 to 28 (MDPPPRPRPHRVAVLLLLLLASSPAARA) form the signal peptide. Asp-510 functions as the Nucleophile in the catalytic mechanism. Glu-513 is an active-site residue. The Proton donor role is filled by Asp-586. N-linked (GlcNAc...) asparagine glycosylation is present at Asn-802.

The protein belongs to the glycosyl hydrolase 31 family. Heterodimer of a catalytic alpha subunit and a beta subunit.

The protein localises to the endoplasmic reticulum. It catalyses the reaction N(4)-(alpha-D-Glc-(1-&gt;3)-alpha-D-Man-(1-&gt;2)-alpha-D-Man-(1-&gt;2)-alpha-D-Man-(1-&gt;3)-[alpha-D-Man-(1-&gt;2)-alpha-D-Man-(1-&gt;3)-[alpha-D-Man-(1-&gt;2)-alpha-D-Man-(1-&gt;6)]-alpha-D-Man-(1-&gt;6)]-beta-D-Man-(1-&gt;4)-beta-D-GlcNAc-(1-&gt;4)-beta-D-GlcNAc)-L-asparaginyl-[protein] + H2O = N(4)-(alpha-D-Man-(1-&gt;2)-alpha-D-Man-(1-&gt;2)-alpha-D-Man-(1-&gt;3)-[alpha-D-Man-(1-&gt;2)-alpha-D-Man-(1-&gt;3)-[alpha-D-Man-(1-&gt;2)-alpha-D-Man-(1-&gt;6)]-alpha-D-Man-(1-&gt;6)]-beta-D-Man-(1-&gt;4)-beta-D-GlcNAc-(1-&gt;4)-beta-D-GlcNAc)-L-asparaginyl-[protein] (N-glucan mannose isomer 9A1,2,3B1,2,3) + beta-D-glucose. The catalysed reaction is N(4)-(alpha-D-Glc-(1-&gt;3)-alpha-D-Glc-(1-&gt;3)-alpha-D-Man-(1-&gt;2)-alpha-D-Man-(1-&gt;2)-alpha-D-Man-(1-&gt;3)-[alpha-D-Man-(1-&gt;2)-alpha-D-Man-(1-&gt;3)-[alpha-D-Man-(1-&gt;2)-alpha-D-Man-(1-&gt;6)]-alpha-D-Man-(1-&gt;6)]-beta-D-Man-(1-&gt;4)-beta-D-GlcNAc-(1-&gt;4)-beta-D-GlcNAc)-L-asparaginyl-[protein] + H2O = N(4)-(alpha-D-Glc-(1-&gt;3)-alpha-D-Man-(1-&gt;2)-alpha-D-Man-(1-&gt;2)-alpha-D-Man-(1-&gt;3)-[alpha-D-Man-(1-&gt;2)-alpha-D-Man-(1-&gt;3)-[alpha-D-Man-(1-&gt;2)-alpha-D-Man-(1-&gt;6)]-alpha-D-Man-(1-&gt;6)]-beta-D-Man-(1-&gt;4)-beta-D-GlcNAc-(1-&gt;4)-beta-D-GlcNAc)-L-asparaginyl-[protein] + beta-D-glucose. Its pathway is glycan metabolism; N-glycan metabolism. Its function is as follows. Cleaves sequentially the 2 innermost alpha-1,3-linked glucose residues from the Glc(2)Man(9)GlcNAc(2) oligosaccharide precursor of immature glycoproteins. May be required for defense response elicited by pathogen-associated molecular patterns (PAMPs). The polypeptide is Probable glucan 1,3-alpha-glucosidase (Oryza sativa subsp. japonica (Rice)).